We begin with the raw amino-acid sequence, 115 residues long: Large ribosomal subunit protein bL21 (115 aa).

This sequence belongs to the bacterial ribosomal protein bL21 family. In terms of assembly, part of the 50S ribosomal subunit. Contacts protein L20.

Its function is as follows. This protein binds to 23S rRNA in the presence of protein L20. The polypeptide is Large ribosomal subunit protein bL21 (Coxiella burnetii (strain RSA 331 / Henzerling II)).